We begin with the raw amino-acid sequence, 96 residues long: Aspartyl/glutamyl-tRNA(Asn/Gln) amidotransferase subunit C (96 aa).

The protein belongs to the GatC family. Heterotrimer of A, B and C subunits.

The catalysed reaction is L-glutamyl-tRNA(Gln) + L-glutamine + ATP + H2O = L-glutaminyl-tRNA(Gln) + L-glutamate + ADP + phosphate + H(+). The enzyme catalyses L-aspartyl-tRNA(Asn) + L-glutamine + ATP + H2O = L-asparaginyl-tRNA(Asn) + L-glutamate + ADP + phosphate + 2 H(+). In terms of biological role, allows the formation of correctly charged Asn-tRNA(Asn) or Gln-tRNA(Gln) through the transamidation of misacylated Asp-tRNA(Asn) or Glu-tRNA(Gln) in organisms which lack either or both of asparaginyl-tRNA or glutaminyl-tRNA synthetases. The reaction takes place in the presence of glutamine and ATP through an activated phospho-Asp-tRNA(Asn) or phospho-Glu-tRNA(Gln). The polypeptide is Aspartyl/glutamyl-tRNA(Asn/Gln) amidotransferase subunit C (Neisseria gonorrhoeae (strain ATCC 700825 / FA 1090)).